The following is a 144-amino-acid chain: C-type isolectin Sp-CL4 (144 aa).

A C-type lectin domain is found at 27–144 (DENRKVKYFE…CSEKLPFMCA (118 aa)). 2 disulfides stabilise this stretch: Cys-48-Cys-143 and Cys-119-Cys-135.

This sequence belongs to the true venom lectin family. Glycosylated with a carbohydrate of 383 Da. As to expression, expressed by the venom gland.

The protein localises to the secreted. In terms of biological role, the role of this hemagglutinin in the venom is unknown, because it is masked by the high venom hemolytic activity. Lectin with specificity to galactose. Induces hemagglutination. The polypeptide is C-type isolectin Sp-CL4 (Scorpaena plumieri (Spotted scorpionfish)).